Consider the following 475-residue polypeptide: MAPQTETQAKAGFKAGVKDYRLTYYTPDYQVKDTDILAAFRMTPQPGVPPEECGAAVAAESSTGTWTTVWTDGLTSLDRYKGRCYDLEPVAGEDNQYIAYVAYPLDLFEEGSVTNLFTSIVGNVFGFKALRALRLEDLRISVAYCKTFQGAPHGIQVERDKLNKYGRGLLGCTIKPKLGLSAKNYGRAVYECLRGGLDFTKDDENVNSQPFMRWRDRFLFCAEAIYKAQAETGEIKGHYLNATAGTSEEMLKRAVFAKELGVPIIMHDYLTGGFTANTSLAYYCRDNGLLLHIHRAMHAVIDRQRNHGIHFRVLAKALRLSGGDHLHSGTVVGKLEGEREVTLGFVDLMRDAYVEKDRSRGIYFTQDWASLPGVMPVASGGIHVWHMPALVEIFGDDACLQFGGGTLGHPWGNAPGAAANRVALEACTQARNEGRDLAREGGDVIRAACKWSPELAAACEVWKEIKFEFDTVDTL.

A propeptide spanning residues 1-2 (MA) is cleaved from the precursor. P3 is subject to N-acetylproline. K14 is modified (N6,N6,N6-trimethyllysine). Substrate contacts are provided by N123 and T173. The active-site Proton acceptor is K175. A substrate-binding site is contributed by K177. Residues K201, D203, and E204 each contribute to the Mg(2+) site. K201 carries the N6-carboxylysine modification. Residue H294 is the Proton acceptor of the active site. R295, H327, and S379 together coordinate substrate.

Belongs to the RuBisCO large chain family. Type I subfamily. As to quaternary structure, heterohexadecamer of 8 large chains and 8 small chains. Requires Mg(2+) as cofactor.

The protein localises to the plastid. The protein resides in the chloroplast. It catalyses the reaction 2 (2R)-3-phosphoglycerate + 2 H(+) = D-ribulose 1,5-bisphosphate + CO2 + H2O. The catalysed reaction is D-ribulose 1,5-bisphosphate + O2 = 2-phosphoglycolate + (2R)-3-phosphoglycerate + 2 H(+). Functionally, ruBisCO catalyzes two reactions: the carboxylation of D-ribulose 1,5-bisphosphate, the primary event in carbon dioxide fixation, as well as the oxidative fragmentation of the pentose substrate in the photorespiration process. Both reactions occur simultaneously and in competition at the same active site. The sequence is that of Ribulose bisphosphate carboxylase large chain from Nephroselmis olivacea (Green alga).